The chain runs to 231 residues: Phosphoglycolate phosphatase (231 aa).

The active-site Nucleophile is the Asp-9. 2 residues coordinate Mg(2+): Asp-9 and Asp-11. Position 154 (Lys-154) interacts with substrate. Mg(2+) contacts are provided by Asp-177 and Asp-181.

This sequence belongs to the archaeal SPP-like hydrolase family. The cofactor is Mg(2+).

It carries out the reaction 2-phosphoglycolate + H2O = glycolate + phosphate. In terms of biological role, catalyzes the dephosphorylation of 2-phosphoglycolate. The polypeptide is Phosphoglycolate phosphatase (Pyrococcus furiosus (strain ATCC 43587 / DSM 3638 / JCM 8422 / Vc1)).